A 421-amino-acid polypeptide reads, in one-letter code: 4-aminobutyrate aminotransferase PuuE (421 aa).

Residues 110–111 (GA) and 238–241 (DEVQ) contribute to the pyridoxal 5'-phosphate site. At lysine 267 the chain carries N6-(pyridoxal phosphate)lysine. Threonine 296 contributes to the pyridoxal 5'-phosphate binding site.

The protein belongs to the class-III pyridoxal-phosphate-dependent aminotransferase family. Pyridoxal 5'-phosphate serves as cofactor.

The enzyme catalyses 4-aminobutanoate + 2-oxoglutarate = succinate semialdehyde + L-glutamate. It participates in amine and polyamine degradation; putrescine degradation; succinate semialdehyde from 4-aminobutanoate. Completely inhibited by succinate and low-aeration conditions. Catalyzes the transfer of the amino group from gamma-aminobutyrate (GABA) to alpha-ketoglutarate (KG) to yield succinic semialdehyde (SSA). PuuE is important for utilization of putrescine as the sole nitrogen or carbon source. This is 4-aminobutyrate aminotransferase PuuE (puuE) from Escherichia coli (strain K12).